The primary structure comprises 383 residues: tRNA(Met) cytidine acetate ligase (383 aa).

ATP is bound by residues 7-20, glycine 101, asparagine 153, and 178-179; these read IAEF…HEFL and RI.

The protein belongs to the TmcAL family.

The protein localises to the cytoplasm. The enzyme catalyses cytidine(34) in elongator tRNA(Met) + acetate + ATP = N(4)-acetylcytidine(34) in elongator tRNA(Met) + AMP + diphosphate. Functionally, catalyzes the formation of N(4)-acetylcytidine (ac(4)C) at the wobble position of elongator tRNA(Met), using acetate and ATP as substrates. First activates an acetate ion to form acetyladenylate (Ac-AMP) and then transfers the acetyl group to tRNA to form ac(4)C34. This chain is tRNA(Met) cytidine acetate ligase, found in Lactobacillus helveticus (strain DPC 4571).